Consider the following 132-residue polypeptide: Agouti-signaling protein (132 aa).

An N-terminal signal peptide occupies residues 1-22 (MDVTXLLLATLLVFLCCFAAYS). N-linked (GlcNAc...) asparagine glycosylation is present at N39. The segment at 62–93 (ISRKEAENKRSSKKEASKQKVARPRTPLSVPC) is disordered. Positions 64–79 (RKEAENKRSSKKEASK) are enriched in basic and acidic residues. Cystine bridges form between C93/C108, C100/C114, C107/C125, C111/C132, and C116/C123. The Agouti domain occupies 93–132 (CVSTRGSCKPPAPACCHPCASCQCRFFRSACSCRVINVNC).

It localises to the secreted. In terms of biological role, involved in the regulation of melanogenesis. The binding of ASP to MC1R precludes alpha-MSH initiated signaling and thus blocks production of cAMP, leading to a down-regulation of eumelanogenesis (brown/black pigment) and thus increasing synthesis of pheomelanin (yellow/red pigment). This chain is Agouti-signaling protein (ASIP), found in Leontopithecus chrysomelas (Golden-headed lion tamarin).